The chain runs to 201 residues: MTVKSEGVLLVLSSPSGAGKTTISAKLLEQSTNLVRSVSMTTRKPRPGEINGKDYFFVTEEKFHELCKAGQMLEYAKVFENFYGIPRDFIEQNLSSGISVLLSIDWQGAFHLFKLMRKKVVSVFILPPSMEELRLRLQKRNSDDASEIERRLAEAQKEISKRDKYDYVIINDDIDKSVEEISSILNKERLKKLKEKPSLED.

In terms of domain architecture, Guanylate kinase-like spans 7–186; the sequence is GVLLVLSSPS…SVEEISSILN (180 aa). Position 14-21 (14-21) interacts with ATP; it reads SPSGAGKT.

This sequence belongs to the guanylate kinase family.

It is found in the cytoplasm. It catalyses the reaction GMP + ATP = GDP + ADP. Functionally, essential for recycling GMP and indirectly, cGMP. This Wolbachia pipientis wMel protein is Guanylate kinase.